A 119-amino-acid polypeptide reads, in one-letter code: DNA-binding protein inhibitor ID-3 (119 aa).

Residues 28-80 form the bHLH domain; it reads RGKSPAAEEPLSLLDDMNHCYSRLRELVPGVPRGTQLSQVEILQRVIDYILDL.

As to quaternary structure, homodimer, and heterodimer with other HLH proteins. Interacts with COPS5 and COPS7A. Interacts with IFI204. Interacts with GATA4 and NKX2-5. Interacts with ANKRD2; both proteins cooperate in myoblast differentiation. Interacts with CLOCK and BMAL1.

It is found in the nucleus. In terms of biological role, transcriptional regulator (lacking a basic DNA binding domain) which negatively regulates the basic helix-loop-helix (bHLH) transcription factors by forming heterodimers and inhibiting their DNA binding and transcriptional activity. Implicated in regulating a variety of cellular processes, including cellular growth, senescence, differentiation, apoptosis, angiogenesis, and neoplastic transformation. Involved in myogenesis by inhibiting skeletal muscle and cardiac myocyte differentiation and promoting muscle precursor cells proliferation. Inhibits the binding of E2A-containing protein complexes to muscle creatine kinase E-box enhancer. Regulates the circadian clock by repressing the transcriptional activator activity of the CLOCK-BMAL1 heterodimer. The chain is DNA-binding protein inhibitor ID-3 (ID3) from Bos taurus (Bovine).